Consider the following 176-residue polypeptide: Ribosome maturation factor RimM (176 aa).

Residues 93–166 (ADEYYHADLI…QVVIEPPNEI (74 aa)) enclose the PRC barrel domain.

It belongs to the RimM family. Binds ribosomal protein uS19.

It is found in the cytoplasm. In terms of biological role, an accessory protein needed during the final step in the assembly of 30S ribosomal subunit, possibly for assembly of the head region. Essential for efficient processing of 16S rRNA. May be needed both before and after RbfA during the maturation of 16S rRNA. It has affinity for free ribosomal 30S subunits but not for 70S ribosomes. This Rhodopseudomonas palustris (strain ATCC BAA-98 / CGA009) protein is Ribosome maturation factor RimM.